Consider the following 180-residue polypeptide: Flavin prenyltransferase UbiX (180 aa).

Residues 9-11 (GAS), Ser-33, 84-87 (SITT), and Arg-119 each bind FMN. Dimethylallyl phosphate contacts are provided by Tyr-149 and Arg-165.

The protein belongs to the UbiX/PAD1 family.

The enzyme catalyses dimethylallyl phosphate + FMNH2 = prenylated FMNH2 + phosphate. In terms of biological role, flavin prenyltransferase that catalyzes the synthesis of the prenylated FMN cofactor (prenyl-FMN) for 4-hydroxy-3-polyprenylbenzoic acid decarboxylase UbiD. The prenyltransferase is metal-independent and links a dimethylallyl moiety from dimethylallyl monophosphate (DMAP) to the flavin N5 and C6 atoms of FMN. The sequence is that of Flavin prenyltransferase UbiX from Thermoplasma acidophilum (strain ATCC 25905 / DSM 1728 / JCM 9062 / NBRC 15155 / AMRC-C165).